The chain runs to 309 residues: MTSDDTVRPGRPRSIETLAELTPEQTDAVLALLTEAARTDGQHAVSEQGRLQLRGPAREGVVHLLLTLDGGELVGYAQLEGTDPVEPPAAELVVHPSHRGQGHGRALGSALLAASGKRLRIWAHGGHSAARHLAQVLGLSLFRELRQLRRPLTGLDLPEPRLPEGVSVRTFVPGQDDAAWLAVNAAAFAHHPEQGSLTQRDLDDRKAEPWFDPAGFFLAERDGELIGFHWTKVHAEERLGEVYVLGIRPDTQGGGLGKALTTIGLRHLEGQGLPTAMLYVDADNKAAVAVYERLGFVTHETDLMYRTET.

N-acetyltransferase domains lie at 16–158 and 166–309; these read ETLA…LDLP and VSVR…RTET. Glutamate 47 lines the 1D-myo-inositol 2-(L-cysteinylamino)-2-deoxy-alpha-D-glucopyranoside pocket. 92–94 contributes to the acetyl-CoA binding site; that stretch reads LVV. Glutamate 193, lysine 232, and glutamate 241 together coordinate 1D-myo-inositol 2-(L-cysteinylamino)-2-deoxy-alpha-D-glucopyranoside. Residues 245 to 247 and 252 to 258 each bind acetyl-CoA; these read LGI and QGGGLGK. Tyrosine 279 provides a ligand contact to 1D-myo-inositol 2-(L-cysteinylamino)-2-deoxy-alpha-D-glucopyranoside.

Belongs to the acetyltransferase family. MshD subfamily. Monomer.

The enzyme catalyses 1D-myo-inositol 2-(L-cysteinylamino)-2-deoxy-alpha-D-glucopyranoside + acetyl-CoA = mycothiol + CoA + H(+). Its function is as follows. Catalyzes the transfer of acetyl from acetyl-CoA to desacetylmycothiol (Cys-GlcN-Ins) to form mycothiol. This Streptomyces coelicolor (strain ATCC BAA-471 / A3(2) / M145) protein is Mycothiol acetyltransferase.